The primary structure comprises 250 residues: Bacteriorhodopsin-II (250 aa).

The next 7 helical transmembrane spans lie at 14 to 34 (EGIW…YFMA), 49 to 69 (VITI…FFGF), 89 to 109 (YADW…LAGA), 114 to 134 (MASL…ATLM), 142 to 162 (AFWT…VVVV), 183 to 203 (IILV…EGLG), and 210 to 230 (ETLL…FILL). Lys222 carries the N6-(retinylidene)lysine modification.

This sequence belongs to the archaeal/bacterial/fungal opsin family. Post-translationally, the covalent binding of retinal to the apoprotein, bacterioopsin, generates bacteriorhodopsin.

The protein localises to the membrane. Light-driven proton pump. This chain is Bacteriorhodopsin-II (xop1), found in Haloarcula marismortui (strain ATCC 43049 / DSM 3752 / JCM 8966 / VKM B-1809) (Halobacterium marismortui).